The chain runs to 316 residues: Homoserine O-succinyltransferase (316 aa).

Cysteine 142 acts as the Acyl-thioester intermediate in catalysis. Substrate-binding residues include lysine 163 and serine 192. Catalysis depends on histidine 235, which acts as the Proton acceptor. The active site involves glutamate 237. Arginine 249 provides a ligand contact to substrate.

The protein belongs to the MetA family.

The protein localises to the cytoplasm. The catalysed reaction is L-homoserine + succinyl-CoA = O-succinyl-L-homoserine + CoA. It functions in the pathway amino-acid biosynthesis; L-methionine biosynthesis via de novo pathway; O-succinyl-L-homoserine from L-homoserine: step 1/1. Transfers a succinyl group from succinyl-CoA to L-homoserine, forming succinyl-L-homoserine. The sequence is that of Homoserine O-succinyltransferase from Shewanella amazonensis (strain ATCC BAA-1098 / SB2B).